We begin with the raw amino-acid sequence, 361 residues long: RuBisCO accumulation factor 1 (361 aa).

The segment at 16–197 (NELAQELLRK…RKQIEQLLVD (182 aa)) is N-terminal alpha-helix. Residues 221 to 347 (PRIVPVVGQL…VIILVRPRRI (127 aa)) are C-terminal beta-sheet.

This sequence belongs to the RAF family. Homodimer. Forms an RbcL(8)-Raf1(8) complex. Each Raf1 dimer clamps the exterior of an RbcL dimer, protecting it. The extreme C-terminus (residues 354-361) inserts into the catalytic pocket of RbcL where the Glu-361 forms a salt bridge with 'Lys-202'. This insertion probably contributes to the assembly of RbcL(8). Forms complexes of many stoichiometries with RbcL with and without RbcS. RbcX and Raf1 can bind simultaneously to RbcL.

The protein localises to the cytoplasm. In terms of biological role, a major RuBisCO chaperone. Acts after GroEL-GroES chaperonin to fold and/or assemble the large subunit of RuBisCO (ccbL, rbcL). Cooperates with RbcX in RbcL folding, plays the major role in assembly of dimers into RbcL(8)-Raf1(8) intermediate complexes. RbcS replaces Raf1, leading to holoenzyme formation. Functionally, in vitro acts as an antagonist to CcmM35, suggesting it might regulate RuBisCO condensation and decondensation. This chain is RuBisCO accumulation factor 1, found in Nostoc sp. (strain PCC 7120 / SAG 25.82 / UTEX 2576).